Consider the following 390-residue polypeptide: 3-ketoacyl-CoA thiolase (390 aa).

The active-site Acyl-thioester intermediate is the C95. Residues H346 and C376 each act as proton acceptor in the active site.

The protein belongs to the thiolase-like superfamily. Thiolase family. In terms of assembly, heterotetramer of two alpha chains (FadB) and two beta chains (FadA).

It localises to the cytoplasm. The catalysed reaction is an acyl-CoA + acetyl-CoA = a 3-oxoacyl-CoA + CoA. It functions in the pathway lipid metabolism; fatty acid beta-oxidation. In terms of biological role, catalyzes the final step of fatty acid oxidation in which acetyl-CoA is released and the CoA ester of a fatty acid two carbons shorter is formed. The polypeptide is 3-ketoacyl-CoA thiolase (Psychrobacter sp. (strain PRwf-1)).